The following is a 171-amino-acid chain: 3-hydroxydecanoyl-[acyl-carrier-protein] dehydratase (171 aa).

Histidine 70 is an active-site residue.

The protein belongs to the thioester dehydratase family. FabA subfamily. Homodimer.

It is found in the cytoplasm. It catalyses the reaction a (3R)-hydroxyacyl-[ACP] = a (2E)-enoyl-[ACP] + H2O. It carries out the reaction (3R)-hydroxydecanoyl-[ACP] = (2E)-decenoyl-[ACP] + H2O. The catalysed reaction is (2E)-decenoyl-[ACP] = (3Z)-decenoyl-[ACP]. It participates in lipid metabolism; fatty acid biosynthesis. Functionally, necessary for the introduction of cis unsaturation into fatty acids. Catalyzes the dehydration of (3R)-3-hydroxydecanoyl-ACP to E-(2)-decenoyl-ACP and then its isomerization to Z-(3)-decenoyl-ACP. Can catalyze the dehydratase reaction for beta-hydroxyacyl-ACPs with saturated chain lengths up to 16:0, being most active on intermediate chain length. The chain is 3-hydroxydecanoyl-[acyl-carrier-protein] dehydratase from Pseudomonas putida (strain W619).